Here is a 152-residue protein sequence, read N- to C-terminus: Endoribonuclease YbeY (152 aa).

Positions 113, 117, and 123 each coordinate Zn(2+).

This sequence belongs to the endoribonuclease YbeY family. Requires Zn(2+) as cofactor.

It is found in the cytoplasm. Functionally, single strand-specific metallo-endoribonuclease involved in late-stage 70S ribosome quality control and in maturation of the 3' terminus of the 16S rRNA. This is Endoribonuclease YbeY from Paracidovorax citrulli (strain AAC00-1) (Acidovorax citrulli).